Here is a 310-residue protein sequence, read N- to C-terminus: Coproporphyrin III ferrochelatase (310 aa).

Fe-coproporphyrin III is bound by residues Tyr13, Arg30, Arg46–Tyr47, Ser54, and Tyr125. Fe(2+) is bound by residues His183 and Glu264.

It belongs to the ferrochelatase family.

Its subcellular location is the cytoplasm. It carries out the reaction Fe-coproporphyrin III + 2 H(+) = coproporphyrin III + Fe(2+). Its pathway is porphyrin-containing compound metabolism; protoheme biosynthesis. Involved in coproporphyrin-dependent heme b biosynthesis. Catalyzes the insertion of ferrous iron into coproporphyrin III to form Fe-coproporphyrin III. This Geobacillus sp. (strain WCH70) protein is Coproporphyrin III ferrochelatase.